Here is a 146-residue protein sequence, read N- to C-terminus: Hemoglobin subunit delta (146 aa).

The region spanning 2–146 (HLTGDEKSAV…VATALAHKYH (145 aa)) is the Globin domain. A Phosphoserine modification is found at Ser50. Heme b-binding residues include His63 and His92.

This sequence belongs to the globin family. Heterotetramer of two delta chains and two alpha chains. Red blood cells.

This is Hemoglobin subunit delta (HBD) from Saimiri sciureus (Common squirrel monkey).